Here is a 245-residue protein sequence, read N- to C-terminus: 1-(5-phosphoribosyl)-5-[(5-phosphoribosylamino)methylideneamino] imidazole-4-carboxamide isomerase (245 aa).

The active-site Proton acceptor is D13. The active-site Proton donor is D132.

This sequence belongs to the HisA/HisF family.

It localises to the cytoplasm. It catalyses the reaction 1-(5-phospho-beta-D-ribosyl)-5-[(5-phospho-beta-D-ribosylamino)methylideneamino]imidazole-4-carboxamide = 5-[(5-phospho-1-deoxy-D-ribulos-1-ylimino)methylamino]-1-(5-phospho-beta-D-ribosyl)imidazole-4-carboxamide. Its pathway is amino-acid biosynthesis; L-histidine biosynthesis; L-histidine from 5-phospho-alpha-D-ribose 1-diphosphate: step 4/9. In Frankia alni (strain DSM 45986 / CECT 9034 / ACN14a), this protein is 1-(5-phosphoribosyl)-5-[(5-phosphoribosylamino)methylideneamino] imidazole-4-carboxamide isomerase.